The following is a 247-amino-acid chain: Oil body-associated protein 2A (247 aa).

Positions 1–26 are disordered; sequence MASSDERPGAYPARDGSENLPPGDPK.

This sequence belongs to the OBAP family.

The protein is Oil body-associated protein 2A of Arabidopsis thaliana (Mouse-ear cress).